We begin with the raw amino-acid sequence, 397 residues long: L-asparaginase-like protein CG4372 (397 aa).

The N-terminal stretch at Met-1 to Ser-22 is a signal peptide. 3 cysteine pairs are disulfide-bonded: Cys-90–Cys-95, Cys-189–Cys-205, and Cys-344–Cys-371.

This sequence belongs to the Ntn-hydrolase family.

The sequence is that of L-asparaginase-like protein CG4372 from Drosophila melanogaster (Fruit fly).